Reading from the N-terminus, the 198-residue chain is Na(+)-translocating NADH-quinone reductase subunit E (198 aa).

A run of 6 helical transmembrane segments spans residues 11–31 (SVFI…FLAV), 35–55 (VSTA…AVPA), 77–97 (FLNF…LEMI), 110–130 (GIFL…SFMV), 140–160 (VVYG…LAGL), and 176–196 (LGIT…FSGI).

The protein belongs to the NqrDE/RnfAE family. In terms of assembly, composed of six subunits; NqrA, NqrB, NqrC, NqrD, NqrE and NqrF.

Its subcellular location is the cell inner membrane. It catalyses the reaction a ubiquinone + n Na(+)(in) + NADH + H(+) = a ubiquinol + n Na(+)(out) + NAD(+). Its function is as follows. NQR complex catalyzes the reduction of ubiquinone-1 to ubiquinol by two successive reactions, coupled with the transport of Na(+) ions from the cytoplasm to the periplasm. NqrA to NqrE are probably involved in the second step, the conversion of ubisemiquinone to ubiquinol. This is Na(+)-translocating NADH-quinone reductase subunit E from Actinobacillus pleuropneumoniae serotype 5b (strain L20).